The following is a 149-amino-acid chain: Nucleoside diphosphate kinase (149 aa).

ATP contacts are provided by lysine 9, phenylalanine 57, arginine 85, threonine 91, arginine 102, and asparagine 112. Catalysis depends on histidine 115, which acts as the Pros-phosphohistidine intermediate.

It belongs to the NDK family. In terms of assembly, homotetramer. It depends on Mg(2+) as a cofactor.

It localises to the cytoplasm. The catalysed reaction is a 2'-deoxyribonucleoside 5'-diphosphate + ATP = a 2'-deoxyribonucleoside 5'-triphosphate + ADP. It carries out the reaction a ribonucleoside 5'-diphosphate + ATP = a ribonucleoside 5'-triphosphate + ADP. Functionally, major role in the synthesis of nucleoside triphosphates other than ATP. The ATP gamma phosphate is transferred to the NDP beta phosphate via a ping-pong mechanism, using a phosphorylated active-site intermediate. This is Nucleoside diphosphate kinase from Desulfitobacterium hafniense (strain Y51).